The primary structure comprises 336 residues: Myb family transcription factor PHL8 (336 aa).

Residues 31–91 form the HTH myb-type domain; sequence TDAKPRLKWT…HLQKYRLGKS (61 aa). A DNA-binding region (H-T-H motif) is located at residues 62–87; it reads PKGLMKVMEIPGLTLYHLKSHLQKYR. A disordered region spans residues 100 to 134; that stretch reads EVSSASENQEVESKNDSRDLRGCSVTEENSNPAKE. Residues 110-120 show a composition bias toward basic and acidic residues; the sequence is VESKNDSRDLR. Residues 139–159 adopt a coiled-coil conformation; sequence TEALQMQMEVQKKLHEQIEVQ. The short motif at 152–157 is the LHEQLE element; sequence LHEQIE.

The protein belongs to the MYB-CC family.

Its subcellular location is the nucleus. The sequence is that of Myb family transcription factor PHL8 from Arabidopsis thaliana (Mouse-ear cress).